Consider the following 333-residue polypeptide: MQAAGHPEPLDSRGSFSLPTMGANVSQDNGTGHNATFSEPLPFLYVLLPAVYSGICAVGLTGNTAVILVILRAPKMKTVTNVFILNLAVADGLFTLVLPVNIAEHLLQYWPFGELLCKLVLAVDHYNIFSSIYFLAVMSVDRYLVVLATVRSRHMPWRTYRGAKVASLCVWLGVTVLVLPFFSFAGVYSNELQVPSCGLSFPWPEQVWFKASRVYTLVLGFVLPVCTICVLYTDLLRRLRAVRLRSGAKALGKARRKVTVLVLVVLAVCLLCWTPFHLASVVALTTDLPQTPLVISMSYVITSLSYANSCLNPFLYAFLDDNFRKNFRSILRC.

The Extracellular segment spans residues 1-45 (MQAAGHPEPLDSRGSFSLPTMGANVSQDNGTGHNATFSEPLPFLY). N-linked (GlcNAc...) asparagine glycans are attached at residues Asn24, Asn29, and Asn34. A helical membrane pass occupies residues 46-69 (VLLPAVYSGICAVGLTGNTAVILV). Residues 70 to 80 (ILRAPKMKTVT) lie on the Cytoplasmic side of the membrane. A helical membrane pass occupies residues 81-105 (NVFILNLAVADGLFTLVLPVNIAEH). At 106-120 (LLQYWPFGELLCKLV) the chain is on the extracellular side. Residues Cys117 and Cys197 are joined by a disulfide bond. Residues 121–140 (LAVDHYNIFSSIYFLAVMSV) traverse the membrane as a helical segment. Residues 141–165 (DRYLVVLATVRSRHMPWRTYRGAKV) are Cytoplasmic-facing. The helical transmembrane segment at 166-185 (ASLCVWLGVTVLVLPFFSFA) threads the bilayer. Residues 186–211 (GVYSNELQVPSCGLSFPWPEQVWFKA) lie on the Extracellular side of the membrane. A helical transmembrane segment spans residues 212–233 (SRVYTLVLGFVLPVCTICVLYT). Residues 234-257 (DLLRRLRAVRLRSGAKALGKARRK) are Cytoplasmic-facing. Residues 258–282 (VTVLVLVVLAVCLLCWTPFHLASVV) traverse the membrane as a helical segment. Topologically, residues 283-292 (ALTTDLPQTP) are extracellular. Residues 293–307 (LVISMSYVITSLSYA) form a helical membrane-spanning segment. Residues 308 to 333 (NSCLNPFLYAFLDDNFRKNFRSILRC) lie on the Cytoplasmic side of the membrane.

The protein belongs to the G-protein coupled receptor 1 family. In terms of tissue distribution, detected at high levels in caudate nucleus, hippocampus and amygdala; at moderate levels in the adult brain, thalamus, parietal cortex, pituitary gland, adrenal gland and lymph nodes.

It localises to the cell membrane. Interacts specifically with a number of opioid ligands. Receptor for neuropeptides B and W, which may be involved in neuroendocrine system regulation, food intake and the organization of other signals. The polypeptide is Neuropeptides B/W receptor type 2 (NPBWR2) (Homo sapiens (Human)).